The chain runs to 225 residues: ATP-dependent dethiobiotin synthetase BioD (225 aa).

12–17 is a binding site for ATP; that stretch reads EVGKTY. Mg(2+) is bound at residue Thr-16. Lys-37 is an active-site residue. Ser-41 provides a ligand contact to substrate. ATP is bound by residues Asp-52, 114–117, and 174–175; these read EGAG and NC. Positions 52 and 114 each coordinate Mg(2+).

The protein belongs to the dethiobiotin synthetase family. As to quaternary structure, homodimer. Mg(2+) is required as a cofactor.

It localises to the cytoplasm. The catalysed reaction is (7R,8S)-7,8-diammoniononanoate + CO2 + ATP = (4R,5S)-dethiobiotin + ADP + phosphate + 3 H(+). It functions in the pathway cofactor biosynthesis; biotin biosynthesis; biotin from 7,8-diaminononanoate: step 1/2. Functionally, catalyzes a mechanistically unusual reaction, the ATP-dependent insertion of CO2 between the N7 and N8 nitrogen atoms of 7,8-diaminopelargonic acid (DAPA, also called 7,8-diammoniononanoate) to form a ureido ring. This is ATP-dependent dethiobiotin synthetase BioD from Francisella tularensis subsp. mediasiatica (strain FSC147).